We begin with the raw amino-acid sequence, 827 residues long: MEKAERRVNGPMAGQALEKLQSFFNRGTKLVTHHLHSLFFYKGFIYVVIGFLLGRAFILSEVLPFALPFFGAMLLIRRDKAFYAVLAVLAGALTISPKHSLLILAALLAFFVFSKVAAFITDDRVKALPIVVFFSMAAARAGFVYAQNGVFTTYDYVMAIVEAGLSFILTLIFLQSLPIFTVKKVKQSLKIEEIICFMILIASVLTGLAGLSYQGMQAEHILARYVVLSFSFIGGASIGCTVGVVTGLILGLANIGNLYQMSLLAFSGLLGGLLKEGKKAGAAIGLIVGSLLISLYGEGSAGLMTTLYESLIAVCLFLLTPQSITRKVARYIPGTVEHLQEQQQYARKIRDVTAQKVDQFSNVFHALSESFATFYQASDEQTDDSEVDLFLSKITEHSCQTCYKKNRCWVQNFDKTYDLMKQVMLETEEKEYASNRRLKKEFQQYCSKSKQVEELIEDELAHHHAHLTLKKKVQDSRRLVAEQLLGVSEVMADFSREIKREREQHFLQEEQIIEALQHFGIEIQHVEIYSLEQGNIDIEMTIPFSGHGESEKIIAPMLSDILEEQILVKAEQHSPHPNGYSHVAFGSTKSYRVSTGAAHAAKGGGLVSGDSYSMMELGARKYAAAISDGMGNGARAHFESNETIKLLEKILESGIDEKIAIKTINSILSLRTTDEIYSTLDLSIIDLQDASCKFLKVGSTPSFIKRGDQVMKVQASNLPIGIINEFDVEVVSEQLKAGDLLIMMSDGIFEGPKHVENHDLWMKRKMKGLKTNDPQEIADLLMEEVIRTRSGQIEDDMTVVVVRIDHNTPKWASIPVPAIFQNKQEIS.

10 helical membrane-spanning segments follow: residues 49–69 (IGFL…ALPF), 71–91 (GAML…VLAG), 116–136 (VAAF…FFSM), 142–162 (GFVY…AIVE), 175–195 (QSLP…EEII), 206–226 (TGLA…ARYV), 247–267 (GLIL…LAFS), 269–289 (LLGG…LIVG), 299–319 (GSAG…LFLL), and 320–340 (TPQS…EHLQ). Residues 341-827 (EQQQYARKIR…AIFQNKQEIS (487 aa)) are Cytoplasmic-facing. The PPM-type phosphatase domain maps to 594–804 (STGAAHAAKG…DDMTVVVVRI (211 aa)).

Requires Mn(2+) as cofactor.

It localises to the cell membrane. It carries out the reaction O-phospho-L-seryl-[protein] + H2O = L-seryl-[protein] + phosphate. The enzyme catalyses O-phospho-L-threonyl-[protein] + H2O = L-threonyl-[protein] + phosphate. In terms of biological role, normally needed for pro-sigma E processing during sporulation but can be bypassed in vegetative cells. Activates SpoIIAA by dephosphorylation. The sequence is that of Stage II sporulation protein E (spoIIE) from Bacillus subtilis (strain 168).